The sequence spans 716 residues: Penicillin-binding protein 2A (716 aa).

The chain crosses the membrane as a helical span at residues 22–42 (LNILFLAAFVIFTWIIVELGI). Catalysis depends on Ser-397, which acts as the Acyl-ester intermediate. A compositionally biased stretch (basic and acidic residues) spans 689 to 706 (SKQDKEGTQQKNKDKIEE). The disordered stretch occupies residues 689–716 (SKQDKEGTQQKNKDKIEENAENTTSSDN).

This sequence belongs to the transpeptidase family.

It is found in the cell membrane. Its subcellular location is the forespore inner membrane. The enzyme catalyses Preferential cleavage: (Ac)2-L-Lys-D-Ala-|-D-Ala. Also transpeptidation of peptidyl-alanyl moieties that are N-acyl substituents of D-alanine.. It functions in the pathway cell wall biogenesis; peptidoglycan biosynthesis. Functionally, involved in the synthesis of peptidoglycan associated with cell wall elongation, especially following spore germination. Has a partially redundant function with PBP 1 (ponA) or PBP 4 (pbpD) during spore outgrowth. Plays a redundant role with PbpH in determining the rod shape of the cell during vegetative growth and spore outgrowth. The protein is Penicillin-binding protein 2A of Bacillus subtilis (strain 168).